Reading from the N-terminus, the 137-residue chain is Holo-[acyl-carrier-protein] synthase (137 aa).

Mg(2+) contacts are provided by aspartate 8 and glutamate 57.

Belongs to the P-Pant transferase superfamily. AcpS family. The cofactor is Mg(2+).

It localises to the cytoplasm. It catalyses the reaction apo-[ACP] + CoA = holo-[ACP] + adenosine 3',5'-bisphosphate + H(+). Its function is as follows. Transfers the 4'-phosphopantetheine moiety from coenzyme A to a Ser of acyl-carrier-protein. The polypeptide is Holo-[acyl-carrier-protein] synthase (Mesorhizobium japonicum (strain LMG 29417 / CECT 9101 / MAFF 303099) (Mesorhizobium loti (strain MAFF 303099))).